Reading from the N-terminus, the 497-residue chain is Cytochrome P450 monooxygenase cicH (497 aa).

The helical transmembrane segment at 2–19 threads the bilayer; sequence AILVRLFFALFVVSVYFF. Residue C439 coordinates heme. A glycan (N-linked (GlcNAc...) asparagine) is linked at N443.

The protein belongs to the cytochrome P450 family. Heme is required as a cofactor.

It is found in the membrane. The protein operates within phytotoxin biosynthesis. Cytochrome P450 monooxygenase; part of the gene cluster that mediates the biosynthesis of cichorine, a phytotoxin active against knapweed, corn, and soybeans. The first step in the pathway is performed by the non-reducing polyketide synthase pkbA that condenses one acetyl-CoA starter unit with 3 malonyl-CoA units. PkbA also catalyzes one methylation step to produce 3-methylorsellinate. The nonribosomal peptide synthase-like protein cicB, the cytochrome P450 monooxygenase cicH and the O-methyltransferase cicE are involved in the conversion of 3-methylorsellinate into nidulol. CicB converts 3-methylorsellinate to a yet unidentified intermediate, cicH may play a ring-closing role for cichorine and cicE is plausibly responsible for the methylation of one of the phenol groups. The oxidoreductase cicC acts downstream with still unidentified enzymes to further convert nidulol into cichorine. The chain is Cytochrome P450 monooxygenase cicH from Emericella nidulans (strain FGSC A4 / ATCC 38163 / CBS 112.46 / NRRL 194 / M139) (Aspergillus nidulans).